A 1788-amino-acid chain; its full sequence is Protein Shroom3 (1788 aa).

Disordered regions lie at residues 1–25 (MMQVSQGTIGSPWHQAYHSSSSTSD), 146–174 (EVNSSSVKNRNYSRQPAYNRHSIGPHGRL), 225–263 (KAAGLHSTNTSSNAAQQPKHVHGDGHLHPVLERSPESSP), 321–367 (GAKS…KQEG), 382–401 (PDISTSSLTNDRNDQQPLRL), 469–488 (NIASSSHNKMDERSNRQADH), 498–548 (TVHA…GNKL), 727–768 (EISP…VTPT), 793–821 (TAEQKKRSYSEPEKMNEVGASESESAPLT), 876–915 (TGRRPSSQETRLLKERSQSTYFSGSIMDNQSMTSTSSMNS), 1011–1067 (SRRH…SASN), 1086–1133 (SFKN…PETK), 1171–1263 (KRGK…SEAE), 1303–1324 (DTESFSGTFVPPSPPPFPPPSL), 1404–1467 (VPAP…AKSQ), and 1507–1538 (ALKEKNQKRKAKKQIDNIIAPESEXKEEKRET). Composition is skewed to polar residues over residues 147-161 (VNSSSVKNRNYSRQP) and 230-240 (HSTNTSSNAAQ). 2 stretches are compositionally biased toward basic and acidic residues: residues 245–259 (VHGDGHLHPVLERSP) and 357–366 (SVKEREKKQE). Positions 476–488 (NKMDERSNRQADH) are enriched in basic and acidic residues. Positions 708 to 811 (VKDAQCKVLE…SEPEKMNEVG (104 aa)) constitute an ASD1 domain. Over residues 793–808 (TAEQKKRSYSEPEKMN) the composition is skewed to basic and acidic residues. Positions 893 to 903 (QSTYFSGSIMD) are enriched in polar residues. The segment covering 904 to 915 (NQSMTSTSSMNS) has biased composition (low complexity). 3 stretches are compositionally biased toward polar residues: residues 1055 to 1067 (EVGNKTSYASASN), 1100 to 1124 (ENSSTIQRSAQLENQRNTKTQSISG), and 1211 to 1263 (TSAQ…SEAE). Over residues 1313–1323 (PPSPPPFPPPS) the composition is skewed to pro residues. The span at 1433 to 1451 (SILQSSEGNFNPSDSQSTL) shows a compositional bias: polar residues. An ASD2 domain is found at 1467-1756 (QELAKEIVTK…QLRCLTESLP (290 aa)). Basic and acidic residues predominate over residues 1529–1538 (SEXKEEKRET). A coiled-coil region spans residues 1653–1708 (RLARVENALSSLGEDASAEERKTWNEKKKQLCGQHEDARELKENLDRREKLVMDFL).

Belongs to the shroom family. Interacts with F-actin. Interacts with ROCK1. As to expression, expressed in epithelial cells of the cement gland.

The protein localises to the cell junction. It is found in the adherens junction. Its subcellular location is the cytoplasm. It localises to the cytoskeleton. The protein resides in the apical cell membrane. In terms of biological role, controls cell shape changes in the neuroepithelium during neural tube closure. Induces apical constriction in epithelial cells by promoting the apical accumulation of F-actin and myosin II, and probably by bundling stress fibers. Induces apicobasal cell elongation by redistributing gamma-tubulin and directing the assembly of robust apicobasal microtubule arrays. This chain is Protein Shroom3 (shroom3), found in Xenopus laevis (African clawed frog).